The following is a 657-amino-acid chain: MCDQQPIQCCVPIPQCCVKGSSFGPSQFSYANNQVLVEAPCEMKVLECAAPCPVQVSQTACQSSTTEVKGQAPCKTTKGKCQAPCQSKTTQVKYQPKTTEIKCQAPCQTQVSCVQCQAPCQSQVSYVQIPQPPQTYYVECPPVYYTETRYVEYPVSTYMPAPALQPGYTYVECPAVGQGQGQGQGGFSTQYQYQGSYGSCTPQSQSRRSYSSCGPQNQSQASYSYCEPQFQSGPSYTNCGPQRQSQASYGNCTSQLQSRASYSNCSSQRRSGATFSTCAPRCQSQGTYGSYTSQRRSQSTSRCLPPRRLQPSYRSCSPPRHSEPCYSSCLPSRCSSGSYNYCTPPRRSEPIYGSHCPPRGRPSGCSQRCGPKCRVEISSPCCPRQVPPQRCPVQIPPFRGRSQSCPRQPSWGVSCPDLRPRADPHPFPRSCRPQHLDRSPESSRQRCPVPAPRPYPRPQPCPSPEPRPYPRPQPCPSPEPRPRPCPQPCPSPEPRPCPPLRRFSEPCLYPEPCSAPQPVPHPAPRPVPRPRPVHCENPGPRPQPCPLPHPEPMPRPAPCSSPEPCGQPVRCPSPCSGPNPVPYRQELGCHESNPCRLDTEGPRCGSYNFTQRQESNGSCESGDVFSGSHGLSGCGDQGNTCGGMNCGAYGGAKGAYF.

3 disordered regions span residues 285–320 (QGTYGSYTSQRRSQSTSRCLPPRRLQPSYRSCSPPR), 425–493 (HPFP…PSPE), and 517–568 (QPVP…CGQP). Positions 292-302 (TSQRRSQSTSR) are enriched in low complexity. The span at 434–444 (QHLDRSPESSR) shows a compositional bias: basic and acidic residues. S442 is modified (phosphoserine). 3 stretches are compositionally biased toward pro residues: residues 449 to 493 (VPAP…PSPE), 517 to 530 (QPVPHPAPRPVPRP), and 539 to 561 (GPRPQPCPLPHPEPMPRPAPCSS).

Its subcellular location is the cytoplasm. The sequence is that of Keratinocyte proline-rich protein from Mus musculus (Mouse).